The sequence spans 606 residues: DNA ligase (606 aa).

Residue E263 coordinates ATP. K265 acts as the N6-AMP-lysine intermediate in catalysis. Residues R270, R285, E315, F355, R432, and K438 each contribute to the ATP site.

The protein belongs to the ATP-dependent DNA ligase family. Mg(2+) is required as a cofactor. Mn(2+) serves as cofactor.

It catalyses the reaction ATP + (deoxyribonucleotide)n-3'-hydroxyl + 5'-phospho-(deoxyribonucleotide)m = (deoxyribonucleotide)n+m + AMP + diphosphate.. The enzyme catalyses ADP + (deoxyribonucleotide)n-3'-hydroxyl + 5'-phospho-(deoxyribonucleotide)m = (deoxyribonucleotide)n+m + AMP + phosphate.. It carries out the reaction GTP + (deoxyribonucleotide)n-3'-hydroxyl + 5'-phospho-(deoxyribonucleotide)m = (deoxyribonucleotide)n+m + GMP + diphosphate.. In terms of biological role, DNA ligase that seals nicks in double-stranded DNA during DNA replication, DNA recombination and DNA repair. Can use ATP, ADP and GTP, but not CTP, TTP or NAD(+). The chain is DNA ligase from Sulfophobococcus zilligii.